A 376-amino-acid chain; its full sequence is N-acetyldiaminopimelate deacetylase (376 aa).

The active site involves D69. Catalysis depends on E128, which acts as the Proton acceptor.

It belongs to the peptidase M20A family. N-acetyldiaminopimelate deacetylase subfamily.

It catalyses the reaction N-acetyl-(2S,6S)-2,6-diaminopimelate + H2O = (2S,6S)-2,6-diaminopimelate + acetate. It functions in the pathway amino-acid biosynthesis; L-lysine biosynthesis via DAP pathway; LL-2,6-diaminopimelate from (S)-tetrahydrodipicolinate (acetylase route): step 3/3. Catalyzes the conversion of N-acetyl-diaminopimelate to diaminopimelate and acetate. The protein is N-acetyldiaminopimelate deacetylase of Bacillus cytotoxicus (strain DSM 22905 / CIP 110041 / 391-98 / NVH 391-98).